The chain runs to 298 residues: Glutamyl-Q tRNA(Asp) synthetase (298 aa).

L-glutamate-binding positions include 9 to 13 and Glu45; that span reads RFAPS. The 'HIGH' region signature appears at 12–22; the sequence is PSPTGLLHAGS. Zn(2+) is bound by residues Cys101, Cys103, Tyr121, and Cys125. L-glutamate is bound by residues Tyr179 and Arg197. A 'KMSKS' region motif is present at residues 235 to 239; that stretch reads KLSKQ. Position 238 (Lys238) interacts with ATP.

It belongs to the class-I aminoacyl-tRNA synthetase family. GluQ subfamily. Requires Zn(2+) as cofactor.

Its function is as follows. Catalyzes the tRNA-independent activation of glutamate in presence of ATP and the subsequent transfer of glutamate onto a tRNA(Asp). Glutamate is transferred on the 2-amino-5-(4,5-dihydroxy-2-cyclopenten-1-yl) moiety of the queuosine in the wobble position of the QUC anticodon. The protein is Glutamyl-Q tRNA(Asp) synthetase of Chromobacterium violaceum (strain ATCC 12472 / DSM 30191 / JCM 1249 / CCUG 213 / NBRC 12614 / NCIMB 9131 / NCTC 9757 / MK).